A 490-amino-acid polypeptide reads, in one-letter code: Betaine aldehyde dehydrogenase (490 aa).

Positions 26, 27, and 93 each coordinate K(+). 150 to 152 is an NAD(+) binding site; that stretch reads GAW. Lys-162 functions as the Charge relay system in the catalytic mechanism. Residues 176-179 and 230-233 each bind NAD(+); these read KPSE and GVET. K(+) is bound at residue Leu-246. Glu-252 (proton acceptor) is an active-site residue. 3 residues coordinate NAD(+): Gly-254, Cys-286, and Glu-387. Cys-286 (nucleophile) is an active-site residue. Cys-286 bears the Cysteine sulfenic acid (-SOH) mark. K(+) contacts are provided by Lys-457 and Gly-460. Glu-464 functions as the Charge relay system in the catalytic mechanism.

It belongs to the aldehyde dehydrogenase family. Dimer of dimers. The cofactor is K(+).

The catalysed reaction is betaine aldehyde + NAD(+) + H2O = glycine betaine + NADH + 2 H(+). It functions in the pathway amine and polyamine biosynthesis; betaine biosynthesis via choline pathway; betaine from betaine aldehyde: step 1/1. In terms of biological role, involved in the biosynthesis of the osmoprotectant glycine betaine. Catalyzes the irreversible oxidation of betaine aldehyde to the corresponding acid. This Acinetobacter baumannii (strain SDF) protein is Betaine aldehyde dehydrogenase.